The sequence spans 207 residues: Urease accessory protein UreG (207 aa).

12-19 (GPVGAGKT) is a GTP binding site.

The protein belongs to the SIMIBI class G3E GTPase family. UreG subfamily. As to quaternary structure, homodimer. UreD, UreF and UreG form a complex that acts as a GTP-hydrolysis-dependent molecular chaperone, activating the urease apoprotein by helping to assemble the nickel containing metallocenter of UreC. The UreE protein probably delivers the nickel.

The protein resides in the cytoplasm. Facilitates the functional incorporation of the urease nickel metallocenter. This process requires GTP hydrolysis, probably effectuated by UreG. The polypeptide is Urease accessory protein UreG (Cereibacter sphaeroides (strain ATCC 17023 / DSM 158 / JCM 6121 / CCUG 31486 / LMG 2827 / NBRC 12203 / NCIMB 8253 / ATH 2.4.1.) (Rhodobacter sphaeroides)).